The primary structure comprises 160 residues: Large ribosomal subunit protein uL15 (160 aa).

A compositionally biased stretch (polar residues) spans 1–14 (MKLNDISDNPGSSK). Positions 1 to 35 (MKLNDISDNPGSSKSRMRVGRGIGSGKGKTCGRGV) are disordered. Residues 21–35 (RGIGSGKGKTCGRGV) are compositionally biased toward gly residues.

The protein belongs to the universal ribosomal protein uL15 family. In terms of assembly, part of the 50S ribosomal subunit.

Functionally, binds to the 23S rRNA. The chain is Large ribosomal subunit protein uL15 from Beijerinckia indica subsp. indica (strain ATCC 9039 / DSM 1715 / NCIMB 8712).